The following is a 98-amino-acid chain: Small ribosomal subunit protein bS6 (98 aa).

It belongs to the bacterial ribosomal protein bS6 family.

In terms of biological role, binds together with bS18 to 16S ribosomal RNA. The sequence is that of Small ribosomal subunit protein bS6 from Limosilactobacillus reuteri (strain DSM 20016) (Lactobacillus reuteri).